Reading from the N-terminus, the 187-residue chain is Pterin-4-alpha-carbinolamine dehydratase 2, mitochondrial (187 aa).

The N-terminal 33 residues, 1–33, are a transit peptide targeting the mitochondrion; sequence MSRLLLPKLFSISRTQVPAASLFNNLYRRHKRF.

Belongs to the pterin-4-alpha-carbinolamine dehydratase family.

It is found in the mitochondrion. It catalyses the reaction (4aS,6R)-4a-hydroxy-L-erythro-5,6,7,8-tetrahydrobiopterin = (6R)-L-erythro-6,7-dihydrobiopterin + H2O. Functionally, involved in tetrahydrobiopterin biosynthesis. Possesses pterin-4-alpha-carbinolamine dehydratase activity when expressed in a bacterial heterolgous system. The protein is Pterin-4-alpha-carbinolamine dehydratase 2, mitochondrial of Arabidopsis thaliana (Mouse-ear cress).